A 326-amino-acid polypeptide reads, in one-letter code: Putative ribose-phosphate pyrophosphokinase 2 (326 aa).

ATP contacts are provided by residues 43–45 (DGE) and 102–103 (RQ). His136 provides a ligand contact to Mg(2+). Residues Asp225 and 229 to 233 (NTGKT) each bind D-ribose 5-phosphate.

The protein belongs to the ribose-phosphate pyrophosphokinase family. Class I subfamily. In terms of assembly, homohexamer. Mg(2+) is required as a cofactor.

The protein localises to the cytoplasm. The catalysed reaction is D-ribose 5-phosphate + ATP = 5-phospho-alpha-D-ribose 1-diphosphate + AMP + H(+). It functions in the pathway metabolic intermediate biosynthesis; 5-phospho-alpha-D-ribose 1-diphosphate biosynthesis; 5-phospho-alpha-D-ribose 1-diphosphate from D-ribose 5-phosphate (route I): step 1/1. Its function is as follows. Involved in the biosynthesis of the central metabolite phospho-alpha-D-ribosyl-1-pyrophosphate (PRPP) via the transfer of pyrophosphoryl group from ATP to 1-hydroxyl of ribose-5-phosphate (Rib-5-P). The sequence is that of Putative ribose-phosphate pyrophosphokinase 2 from Streptococcus pyogenes serotype M3 (strain SSI-1).